The primary structure comprises 110 residues: U12-hexatoxin-Hi1a (110 aa).

The N-terminal stretch at 1–18 is a signal peptide; sequence MRVALVFLVLSILAATHG. 3 disulfides stabilise this stretch: cysteine 72–cysteine 86, cysteine 79–cysteine 91, and cysteine 85–cysteine 104.

In terms of tissue distribution, expressed by the venom gland.

It localises to the secreted. Probable ion channel inhibitor. In Hadronyche infensa (Fraser island funnel-web spider), this protein is U12-hexatoxin-Hi1a.